The primary structure comprises 362 residues: Phosphoserine aminotransferase (362 aa).

L-glutamate-binding residues include S9 and R42. Pyridoxal 5'-phosphate-binding positions include 76–77, W102, T153, D174, and Q197; that span reads GR. K198 is subject to N6-(pyridoxal phosphate)lysine. Pyridoxal 5'-phosphate is bound at residue 239-240; sequence NT.

It belongs to the class-V pyridoxal-phosphate-dependent aminotransferase family. SerC subfamily. Homodimer. It depends on pyridoxal 5'-phosphate as a cofactor.

The protein localises to the cytoplasm. It catalyses the reaction O-phospho-L-serine + 2-oxoglutarate = 3-phosphooxypyruvate + L-glutamate. The catalysed reaction is 4-(phosphooxy)-L-threonine + 2-oxoglutarate = (R)-3-hydroxy-2-oxo-4-phosphooxybutanoate + L-glutamate. It functions in the pathway amino-acid biosynthesis; L-serine biosynthesis; L-serine from 3-phospho-D-glycerate: step 2/3. It participates in cofactor biosynthesis; pyridoxine 5'-phosphate biosynthesis; pyridoxine 5'-phosphate from D-erythrose 4-phosphate: step 3/5. Functionally, catalyzes the reversible conversion of 3-phosphohydroxypyruvate to phosphoserine and of 3-hydroxy-2-oxo-4-phosphonooxybutanoate to phosphohydroxythreonine. This is Phosphoserine aminotransferase from Escherichia coli O1:K1 / APEC.